The sequence spans 345 residues: Heat stress transcription factor A-2 (345 aa).

The span at 17–30 (GSVAASSSVGSSSS) shows a compositional bias: low complexity. The segment at 17–40 (GSVAASSSVGSSSSPRPMEGLNET) is disordered. Residues 42 to 136 (PPPFLTKTYE…LLKNIKRRRN (95 aa)) mediate DNA binding. The segment at 150–216 (SCVEVGQYGF…QMMTFLAKAL (67 aa)) is hydrophobic repeat HR-A/B. Positions 231-238 (EKKSLFGL) match the Nuclear localization signal motif. The AHA1 motif lies at 273-282 (EMLFAAAIDD). Lys-315 is covalently cross-linked (Glycyl lysine isopeptide (Lys-Gly) (interchain with G-Cter in SUMO)). Positions 324-333 (LDWDSQDLHD) match the AHA2 motif. The Nuclear export signal signature appears at 334–341 (MVDQMGFL).

It belongs to the HSF family. Class A subfamily. Homotrimer. Interacts with SUMO1. Binds to HSBP. In terms of processing, exhibits temperature-dependent phosphorylation. Post-translationally, sumoylated at Lys-315. Sumoylation represses its function.

It is found in the cytoplasm. It localises to the nucleus. Functionally, transcriptional activator that specifically binds DNA sequence 5'-AGAAnnTTCT-3' known as heat shock promoter elements (HSE). Seems to be involved in other environmental stress responses. Activates ascorbate peroxidase 2 (APX2) in addition to several heat shock protein (HSPs). Binds to the promoter of SGIP1 and activates its expression in heat acclimated plants. Involved in the mechanisms necessary for quick response to heat and subsequent heritable transgenerational memory of heat acclimation (global warming) such as early flowering and attenuated immunity; this process includes epigenetic regulation as well as post-transcriptional gene silencing (PTGS). In response to heat, HSFA2 is activated and promotes the expression of REF6 which in turn derepresses HSFA2, thus establishing an inheritable feedback loop able to trigger SGIP1 and subsequent SGIP1-mediated SGS3 degradation; this prevents the biosynthesis of trans-acting siRNA (tasiRNA) and leads to the release of HTT5, which drives early flowering but attenuates immunity. This Arabidopsis thaliana (Mouse-ear cress) protein is Heat stress transcription factor A-2.